Consider the following 323-residue polypeptide: Calcium homeostasis modulator protein 2 (323 aa).

Residues 1-21 are Cytoplasmic-facing; it reads MAALIAENFRFLSLFFKSKDV. Positions 14 to 39 are central pore; sequence LFFKSKDVMIFNGLVALGTVGSQELF. A helical membrane pass occupies residues 22–43; it reads MIFNGLVALGTVGSQELFSVVA. Over 44–52 the chain is Extracellular; it reads FHCPCSPAR. Disulfide bonds link Cys46/Cys130 and Cys48/Cys162. The helical transmembrane segment at 53 to 76 threads the bilayer; sequence NYLYGLTAIGVPALALFLIGVILN. Residues 77–101 lie on the Cytoplasmic side of the membrane; sequence NHTWNLVAECQYRRAKNCSAAPNFL. Residues 102–132 form a helical membrane-spanning segment; sequence LLSSILGRAAVAPVTWSVISLLRGEAYVCAL. Residues 133-179 lie on the Extracellular side of the membrane; that stretch reads SEFVDPSSLTAGDKGFPPAHATEVLARFPCGEGPANLSSFREEVSRR. Positions 145-152 are hemichannel docking; that stretch reads DKGFPPAH. A helical membrane pass occupies residues 180-206; the sequence is LKYESQLFGWLLIGVVAILVFLTKCLK. Residues 207–323 lie on the Cytoplasmic side of the membrane; it reads HYCSPLSYRQ…DNVEMALLTA (117 aa). The intersubunit interaction stretch occupies residues 214 to 251; the sequence is YRQEAYWAQYRTNEDQLFQRTAEVHSRVLAANNVRRFF.

Belongs to the CALHM family. In terms of assembly, homo-undecamer. Two undecameric hemichannels can assemble in a head-to-head manner to form a gap junction. As to expression, neuron, astrocyte, and microglia.

It localises to the cell membrane. It carries out the reaction ATP(in) = ATP(out). Its activity is regulated as follows. Inhibited by divalent cations such as Co(2+) and Ni(2+). Pore-forming subunit of Ca(2+) homeostasis modulator channels. Mediates ATP release from astrocytes and ATP-induced Ca(2+) influx in microglia thus regulating neuronal ATP and Ca(2+) homeostasis, synaptic transmission and neuroinflammatory response. May form intercellular gap junctions. The gating mechanism remains unknown. The chain is Calcium homeostasis modulator protein 2 from Mus musculus (Mouse).